The sequence spans 805 residues: Leucine--tRNA ligase (805 aa).

Positions 40-51 (PYPSGQGLHVGH) match the 'HIGH' region motif. Residues 577–581 (KMSKS) carry the 'KMSKS' region motif. ATP is bound at residue Lys-580.

Belongs to the class-I aminoacyl-tRNA synthetase family.

The protein resides in the cytoplasm. The enzyme catalyses tRNA(Leu) + L-leucine + ATP = L-leucyl-tRNA(Leu) + AMP + diphosphate. The chain is Leucine--tRNA ligase from Limosilactobacillus fermentum (strain NBRC 3956 / LMG 18251) (Lactobacillus fermentum).